The following is a 90-amino-acid chain: Small ribosomal subunit protein uS19 (90 aa).

The protein belongs to the universal ribosomal protein uS19 family.

Its function is as follows. Protein S19 forms a complex with S13 that binds strongly to the 16S ribosomal RNA. The polypeptide is Small ribosomal subunit protein uS19 (Hydrogenovibrio crunogenus (strain DSM 25203 / XCL-2) (Thiomicrospira crunogena)).